A 61-amino-acid polypeptide reads, in one-letter code: SPbeta prophage-derived uncharacterized protein YotK (61 aa).

Residues 7–57 (SIQTLLNKMDRQMKTVKEAIEEKDLQRAHRNLINLADNNEELMQEIRWVKK) adopt a coiled-coil conformation.

The protein is SPbeta prophage-derived uncharacterized protein YotK (yotK) of Bacillus subtilis (strain 168).